The primary structure comprises 38 residues: Large ribosomal subunit protein bL36 (38 aa).

The protein belongs to the bacterial ribosomal protein bL36 family.

The polypeptide is Large ribosomal subunit protein bL36 (Alcanivorax borkumensis (strain ATCC 700651 / DSM 11573 / NCIMB 13689 / SK2)).